Here is a 433-residue protein sequence, read N- to C-terminus: 2,2-dialkylglycine decarboxylase (433 aa).

Position 272 is an N6-(pyridoxal phosphate)lysine (Lys-272).

It belongs to the class-III pyridoxal-phosphate-dependent aminotransferase family. Homotetramer. The cofactor is pyridoxal 5'-phosphate.

It catalyses the reaction 2,2-dialkylglycine + pyruvate + H(+) = dialkyl ketone + L-alanine + CO2. In terms of biological role, the dialkylglycine decarboxylase is of interest because it normally catalyzes both decarboxylation and amino transfer. It may be more properly described as a decarboxylating aminotransferase rather than an aminotransferring decarboxylase. The sequence is that of 2,2-dialkylglycine decarboxylase (dgdA) from Burkholderia cepacia (Pseudomonas cepacia).